The following is a 704-amino-acid chain: Capsule polysaccharide modification protein LipA (704 aa).

Its subcellular location is the cell inner membrane. Involved in the phospholipid modification of the capsular polysaccharide, a strong requirement for its translocation to the cell surface. The chain is Capsule polysaccharide modification protein LipA (lipA) from Neisseria meningitidis serogroup A / serotype 4A (strain DSM 15465 / Z2491).